A 309-amino-acid polypeptide reads, in one-letter code: DSC E3 ubiquitin ligase complex subunit C (309 aa).

Residue Asn-61 is glycosylated (N-linked (GlcNAc...) asparagine). Disordered regions lie at residues Leu-88–Lys-110 and Glu-148–Leu-177. The next 2 helical transmembrane spans lie at Asp-257–Leu-277 and Gly-289–Asn-309.

It belongs to the dsc3 family. As to quaternary structure, component of the DSC E3 ubiquitin ligase complex composed of dscA, dscB, dscC and dscD.

The protein resides in the endoplasmic reticulum membrane. It functions in the pathway protein modification; protein ubiquitination. In terms of biological role, component of the DSC E3 ubiquitin ligase complex which is required for the srbA transcriptional activator proteolytic cleavage to release the soluble transcription factor from the membrane in low oxygen or sterol conditions. Required for growth during hypoxia and triazole drug susceptibility, as well as for virulence in a murine model of invasive pulmonary aspergillosis (IPA). This is DSC E3 ubiquitin ligase complex subunit C from Aspergillus fumigatus (strain CBS 144.89 / FGSC A1163 / CEA10) (Neosartorya fumigata).